A 497-amino-acid chain; its full sequence is MPLVTRNIEPRHLCRQTLPSDTSELECRTNITLANVIRQLGSLSKYAEDIFGEICTQASAFASRVNSLAERVDRVQVKVTQLDPKEEEVSLQGINTRKAFRSSTTQDQKLFDRNSLPVPVLETYNSCDAPPPLNNLSPYRDDGKEALKFYTNPSYFFDLWKEKMLQDTKDIMKEKRKHRKEKKDNPNRGNVNPRKIKTRKEEWEKMKMGQEFVESKERLGPSGYSSTLVYQNGSIGSVENVDAASYPPPPQSDSASSPSPSFSEDNLPPPPAEFSYPADNQRGSVLAGPKRTSMVSPSHPPPAPPLSSPPGPKPGFAPPPAPPPPPPMSVPPPLPSMGFGSPGTPPPPSPPSFPPHPDFAAPPPPPPPPAADYPMPPPPLSQPSGGAPPPPPPPPPPGPPPLPFSGADGQPAAPPPPPPSEATKPKSSLPAVSDARSDLLSAIRQGFQLRRVEEQREQEKRDVVGNDVATILSRRIAVEYSDSEDDSSEFDEDDWSD.

Disordered stretches follow at residues 173–203 (KEKR…KEEW) and 239–436 (ENVD…SDAR). The span at 252–263 (SDSASSPSPSFS) shows a compositional bias: low complexity. Pro residues-rich tracts occupy residues 298 to 335 (SHPP…PPLP) and 343 to 403 (GTPP…PPLP). The 18-residue stretch at 435–452 (ARSDLLSAIRQGFQLRRV) folds into the WH2 domain. Residue Ser-473 is modified to Phosphoserine.

It belongs to the SCAR/WAVE family. As to quaternary structure, binds actin and the Arp2/3 complex. Interacts with BAIAP2. Component of the WAVE2 complex composed of ABI1, CYFIP1/SRA1, NCKAP1/NAP1 (NCKAP1l/HEM1 in hematopoietic cells) and WASF2/WAVE2. Directly interacts with BRK1. Interacts with human cytomegalovirus protein UL135. Interacts with FNBP1L (via the SH3 domain).

It localises to the cytoplasm. It is found in the cytoskeleton. Its subcellular location is the cell projection. The protein localises to the lamellipodium. The protein resides in the basolateral cell membrane. In terms of biological role, downstream effector molecule involved in the transmission of signals from tyrosine kinase receptors and small GTPases to the actin cytoskeleton. Promotes formation of actin filaments. Part of the WAVE complex that regulates lamellipodia formation. The WAVE complex regulates actin filament reorganization via its interaction with the Arp2/3 complex. The polypeptide is Actin-binding protein WASF2 (Mus musculus (Mouse)).